Here is a 107-residue protein sequence, read N- to C-terminus: uncharacterized protein (107 aa).

A run of 4 helical transmembrane segments spans residues 9 to 28, 33 to 50, 55 to 72, and 77 to 99; these read FLVF…LIME, SYII…SLNI, LAIA…AIHV, and YRVI…YLKG.

The protein resides in the cell membrane. This is an uncharacterized protein from Archaeoglobus fulgidus (strain ATCC 49558 / DSM 4304 / JCM 9628 / NBRC 100126 / VC-16).